A 413-amino-acid polypeptide reads, in one-letter code: Multifunctional CCA protein (413 aa).

ATP is bound by residues Gly8 and Arg11. Positions 8 and 11 each coordinate CTP. Asp21 and Asp23 together coordinate Mg(2+). Residues Arg91, Arg143, and Arg146 each coordinate ATP. Arg91, Arg143, and Arg146 together coordinate CTP. The region spanning 232–333 (TGVHVMMVVD…VRLFERSDAL (102 aa)) is the HD domain.

This sequence belongs to the tRNA nucleotidyltransferase/poly(A) polymerase family. Bacterial CCA-adding enzyme type 1 subfamily. Monomer. Can also form homodimers and oligomers. Mg(2+) serves as cofactor. Ni(2+) is required as a cofactor.

It catalyses the reaction a tRNA precursor + 2 CTP + ATP = a tRNA with a 3' CCA end + 3 diphosphate. The enzyme catalyses a tRNA with a 3' CCA end + 2 CTP + ATP = a tRNA with a 3' CCACCA end + 3 diphosphate. In terms of biological role, catalyzes the addition and repair of the essential 3'-terminal CCA sequence in tRNAs without using a nucleic acid template. Adds these three nucleotides in the order of C, C, and A to the tRNA nucleotide-73, using CTP and ATP as substrates and producing inorganic pyrophosphate. tRNA 3'-terminal CCA addition is required both for tRNA processing and repair. Also involved in tRNA surveillance by mediating tandem CCA addition to generate a CCACCA at the 3' terminus of unstable tRNAs. While stable tRNAs receive only 3'-terminal CCA, unstable tRNAs are marked with CCACCA and rapidly degraded. The polypeptide is Multifunctional CCA protein (Burkholderia cenocepacia (strain ATCC BAA-245 / DSM 16553 / LMG 16656 / NCTC 13227 / J2315 / CF5610) (Burkholderia cepacia (strain J2315))).